A 67-amino-acid polypeptide reads, in one-letter code: DNA-directed RNA polymerase subunit omega (67 aa).

The protein belongs to the RNA polymerase subunit omega family. The RNAP catalytic core consists of 2 alpha, 1 beta, 1 beta' and 1 omega subunit. When a sigma factor is associated with the core the holoenzyme is formed, which can initiate transcription.

It carries out the reaction RNA(n) + a ribonucleoside 5'-triphosphate = RNA(n+1) + diphosphate. Functionally, promotes RNA polymerase assembly. Latches the N- and C-terminal regions of the beta' subunit thereby facilitating its interaction with the beta and alpha subunits. The sequence is that of DNA-directed RNA polymerase subunit omega from Listeria welshimeri serovar 6b (strain ATCC 35897 / DSM 20650 / CCUG 15529 / CIP 8149 / NCTC 11857 / SLCC 5334 / V8).